We begin with the raw amino-acid sequence, 775 residues long: MEAPYSMTAHYDEFQEVKYESRCGTGGARGTSLPPGFPRSSGRSASGARSGLPRWNRREVCLLSGLVFAAGLCAILAAMLALKYLGPGAAGTGGACPEGCPERKAFARAARFLSANLDASIDPCQDFYSFACGGWLRRHAIPDDKLTYGTIAAIGEQNEERLRRLLARPTGGPGGAAQRKVRAFFRSCLDMREIERLGPRPMLEVIEDCGGWDLGGAADRPGAARWDLNRLLYKAQGVYSAAALFSLTVSLDDRNSSRYVIRIDQDGLTLPERTLYLAQDEGSEKVLAAYKVFMERLLRLLGADAVEQKAQEILQLEQRLANISVSEYDDLRRDVSSVYNKVTLGQLQKITPHLQWKWLLDQIFQEDFSEEEEVVLLATDYMQQVSQLIRSTPRRILHNYLVWRVVVVLSEHLSPPFREALHELAKEMEGNDKPQELARVCLGQANRHFGMALGALFVHEHFSAASKAKVQQLVEDIKYILGQRLEELDWMDAQTKAAARAKLQYMMVMVGYPDFLLKPEAVDKEYEFEVHEKTYLKNILNSIRFSIQLSVKKIRQEVDKSTWLLPPQALNAYYLPNKNQMVFPAGILQPTLYDPDFPQSLNYGGIGTIIGHELTHGYDDWGGQYDRSGNLLHWWTEASYSRFLHKAECIVRLYDNFTVYNQRVNGKHTLGENIADMGGLKLAYYAYQKWVREHGPEHPLHRLKYTHNQLFFIAFAQNWCIKRRSQSIYLQVLTDKHAPEHYRVLGSVSQFEEFGRAFHCPKDSPMNPVHKCSVW.

At 1–61 (MEAPYSMTAH…LPRWNRREVC (61 aa)) the chain is on the cytoplasmic side. The disordered stretch occupies residues 23-51 (CGTGGARGTSLPPGFPRSSGRSASGARSG). Residues 32-51 (SLPPGFPRSSGRSASGARSG) show a composition bias toward low complexity. Residues 62–82 (LLSGLVFAAGLCAILAAMLAL) traverse the membrane as a helical; Signal-anchor for type II membrane protein segment. At 83–775 (KYLGPGAAGT…MNPVHKCSVW (693 aa)) the chain is on the lumenal side. Positions 99-775 (GCPERKAFAR…MNPVHKCSVW (677 aa)) constitute a Peptidase M13 domain. 4 disulfides stabilise this stretch: C124–C760, C132–C720, C188–C441, and C649–C772. N-linked (GlcNAc...) asparagine glycans are attached at residues N255 and N322. H612 provides a ligand contact to Zn(2+). E613 is a catalytic residue. Zn(2+) is bound at residue H616. A glycan (N-linked (GlcNAc...) asparagine) is linked at N656. A Zn(2+)-binding site is contributed by E672. The active-site Proton donor is the D676.

This sequence belongs to the peptidase M13 family. Zn(2+) serves as cofactor. As to expression, highly expressed in the CNS, in particular in neurons of the caudate putamen, diagonal band, the paraventricular nucleus of the thalamus, part of the hypothalamus, in cranial motor nuclei, inferior olive, and substantia gelatinosa of the spinal tract trigeminal nucleus. Not detected in cerebral cortex, hippocampus and cerebellum.

The protein resides in the membrane. Its function is as follows. May contribute to the degradation of peptide hormones and be involved in the inactivation of neuronal peptides. Cleaves the synthetic substrate Z-Gly-Gly-Leu-pNA and releases pNA. May protect against C2-ceramide-induced apoptosis. The sequence is that of Endothelin-converting enzyme-like 1 (Ecel1) from Rattus norvegicus (Rat).